The following is a 312-amino-acid chain: Olfactory receptor 2M7 (312 aa).

Over 1 to 25 (MAWENQTFNSDFLLLGIFNHSPTHT) the chain is Extracellular. A glycan (N-linked (GlcNAc...) asparagine) is linked at asparagine 5. A helical membrane pass occupies residues 26 to 49 (FLFFLVLAIFSVAFMGNSIMVLLI). At 50–57 (YLDTQLHT) the chain is on the cytoplasmic side. The helical transmembrane segment at 58-79 (PMYFLLSQLSLMDLMLICTTVP) threads the bilayer. The Extracellular segment spans residues 80-100 (KMAFNYLSGSKSISMAGCATQ). Cysteine 97 and cysteine 189 form a disulfide bridge. A helical membrane pass occupies residues 101–120 (IFFYISLLGSECFLLAVMSY). Residues 121-139 (DRYTAICHPLRYTNLMRPK) lie on the Cytoplasmic side of the membrane. The chain crosses the membrane as a helical span at residues 140–158 (ICGLMTAFSWILGSTDGII). Residues 159 to 195 (DAVATFSFSYCGSREIAHFCCDFPSLLILSCNDTSIF) are Extracellular-facing. The helical transmembrane segment at 196-219 (EEVIFICCIVMLVFPVAIIITSYA) threads the bilayer. Topologically, residues 220 to 236 (RVILAVIHMGSGEGRRK) are cytoplasmic. Residues 237 to 259 (AFTTCSSHLMVVGMYYGAGLFMC) form a helical membrane-spanning segment. Over 260–272 (IQPTSHHSPMQDK) the chain is Extracellular. Residues 273–292 (MVSVFYTIVTPMLNPLIYSL) form a helical membrane-spanning segment. Residues 293-311 (RNKEVTRALMKILGKGKSG) lie on the Cytoplasmic side of the membrane.

Belongs to the G-protein coupled receptor 1 family.

Its subcellular location is the cell membrane. Odorant receptor. The polypeptide is Olfactory receptor 2M7 (OR2M7) (Homo sapiens (Human)).